The following is a 190-amino-acid chain: Molybdenum cofactor guanylyltransferase (190 aa).

Residues 8–10, K20, D64, and D98 contribute to the GTP site; that span reads LAG. D98 contacts Mg(2+).

Belongs to the MobA family. In terms of assembly, monomer. It depends on Mg(2+) as a cofactor.

The protein localises to the cytoplasm. The enzyme catalyses Mo-molybdopterin + GTP + H(+) = Mo-molybdopterin guanine dinucleotide + diphosphate. Functionally, transfers a GMP moiety from GTP to Mo-molybdopterin (Mo-MPT) cofactor (Moco or molybdenum cofactor) to form Mo-molybdopterin guanine dinucleotide (Mo-MGD) cofactor. In Rhodobacter capsulatus (Rhodopseudomonas capsulata), this protein is Molybdenum cofactor guanylyltransferase.